We begin with the raw amino-acid sequence, 261 residues long: RING finger protein 208 (261 aa).

The interval 83–106 (PALEGAPHTPPLPRRPRKGSSELG) is disordered. Ser-102 is modified (phosphoserine). The segment at 143–190 (CPTCGHSYNVTQRRPRVLSCLHSVCEQCLQILYESCPKYKFISCPTCR) adopts an RING-type zinc-finger fold.

The chain is RING finger protein 208 (RNF208) from Homo sapiens (Human).